Consider the following 47-residue polypeptide: Boigatoxin-A (47 aa).

Glutamine 1 carries the post-translational modification Pyrrolidone carboxylic acid. Intrachain disulfides connect cysteine 10-cysteine 34 and cysteine 13-cysteine 21.

Monomer. In terms of tissue distribution, expressed by the venom gland.

It localises to the secreted. In terms of biological role, this toxin may inhibit nicotinic acetylcholine receptor (nAChR). It has poorly reversible postsynaptic blocking activity in a chick muscle preparation and readily reversible inhibitory activity at a presynaptic site in the rat vas deferens prostatic segment most likely to prevent the release of neurotransmitters. This is Boigatoxin-A from Boiga dendrophila (Mangrove snake).